Consider the following 137-residue polypeptide: MLQPKRTKFRKQFKGRIHGVAKGGTDLNFGAYGLKAVEPERVTARQIEAARRAITRYMKRSGRVWIRIFPDLPVTSKPTEVRMGKGKGSVDYWAARVAPGRVMFELDGVPEDVAREALRLGAAKLPIKTRFIQRIAE.

This sequence belongs to the universal ribosomal protein uL16 family. As to quaternary structure, part of the 50S ribosomal subunit.

Functionally, binds 23S rRNA and is also seen to make contacts with the A and possibly P site tRNAs. The polypeptide is Large ribosomal subunit protein uL16 (Bartonella tribocorum (strain CIP 105476 / IBS 506)).